Reading from the N-terminus, the 340-residue chain is Solute-binding protein Dde_0634 (340 aa).

The signal sequence occupies residues 1–29 (MKSTFAALLIMVGCLVSGALLTGSEAAAA). (indol-3-yl)acetate-binding positions include Y99, R172, 210-213 (TSLD), and Y235.

Belongs to the bacterial solute-binding protein 7 family. The complex is comprised of an extracytoplasmic solute-binding protein and a heteromeric permease formed by two transmembrane proteins.

It localises to the periplasm. Solute-binding protein that binds indole-3-pyruvate and indole-3-acetate (in vitro). Can also bind D-tryptophan (in vitro), but that is probably not a physiological ligand. Probably part of a tripartite ATP-independent periplasmic (TRAP) transport system that mediates solute transport into the cytoplasm. The sequence is that of Solute-binding protein Dde_0634 from Oleidesulfovibrio alaskensis (strain ATCC BAA-1058 / DSM 17464 / G20) (Desulfovibrio alaskensis).